The primary structure comprises 975 residues: Lateral signaling target protein 2 homolog (975 aa).

Disordered regions lie at residues 299-458 and 504-523; these read PLGS…GTDE and YGTA…PSTS. Low complexity-rich tracts occupy residues 302–352, 365–376, 383–400, and 408–429; these read SSSI…TTNT, NNHNSNSNSSSN, TLRS…TPTA, and PSHS…PADW. Residues 430–458 are compositionally biased toward acidic residues; the sequence is SDGDDEDEDDDDIDVDEEDPESSDDGTDE. Residues serine 540 and serine 541 each carry the phosphoserine modification. Disordered regions lie at residues 556-633 and 740-891; these read EEHM…SSLS and DNVF…SPPA. Residues 564-602 show a composition bias toward basic residues; it reads GRHHRHHQSHHHHHHHRHSHQHQHRQPHPHRTTRSGRKR. Residues 621–633 show a composition bias toward low complexity; the sequence is LASGDTSAASSLS. The segment covering 751 to 770 has biased composition (polar residues); the sequence is ATGQRHSAGASMQRNNTIDL. Serine 796 bears the Phosphoserine mark. 2 stretches are compositionally biased toward low complexity: residues 802–860 and 877–890; these read AASS…PVSA and PSSA…LSPP. An FYVE-type zinc finger spans residues 895 to 955; the sequence is DGKAPRCMAC…VCRDCYVREV (61 aa). 8 residues coordinate Zn(2+): cysteine 901, cysteine 904, cysteine 917, cysteine 920, cysteine 925, cysteine 928, cysteine 947, and cysteine 950.

The protein belongs to the lst-2 family.

Its function is as follows. Negative regulator of epidermal growth factor receptor (EGFR) signaling. The chain is Lateral signaling target protein 2 homolog from Drosophila sechellia (Fruit fly).